Reading from the N-terminus, the 398-residue chain is Tryptophan synthase beta chain (398 aa).

K88 carries the N6-(pyridoxal phosphate)lysine modification.

It belongs to the TrpB family. Tetramer of two alpha and two beta chains. Requires pyridoxal 5'-phosphate as cofactor.

It carries out the reaction (1S,2R)-1-C-(indol-3-yl)glycerol 3-phosphate + L-serine = D-glyceraldehyde 3-phosphate + L-tryptophan + H2O. Its pathway is amino-acid biosynthesis; L-tryptophan biosynthesis; L-tryptophan from chorismate: step 5/5. The beta subunit is responsible for the synthesis of L-tryptophan from indole and L-serine. This is Tryptophan synthase beta chain from Haemophilus influenzae (strain PittGG).